We begin with the raw amino-acid sequence, 83 residues long: MVTIRLARGGAKKRPFYNIVVADSRNARDGRFIERVGFFNPMARGQEETLRLDLDRVEHWVTNGAGTSERVAKLIKDARKAAA.

Belongs to the bacterial ribosomal protein bS16 family.

The sequence is that of Small ribosomal subunit protein bS16 from Shewanella woodyi (strain ATCC 51908 / MS32).